Here is a 146-residue protein sequence, read N- to C-terminus: VQWTAEEKQLITGLWGKVNVAECGGEALARLLIVYPWTQRFFASFGNLSSPTAVLGNPKVQAHGKKVLTSFGEAVKNLDSIKGTFAQLSELHCDKLHVDPENFRLLGDILVVVLAAHFGKDFTPDCQAAWQKLVRVVAHALARKYH.

A Globin domain is found at 2–146; it reads QWTAEEKQLI…VAHALARKYH (145 aa). 2 residues coordinate heme b: histidine 63 and histidine 92.

This sequence belongs to the globin family. In terms of assembly, heterotetramer of two alpha chains and two beta chains. In terms of tissue distribution, red blood cells.

In terms of biological role, involved in oxygen transport from the lung to the various peripheral tissues. In Turdus merula (Common blackbird), this protein is Hemoglobin subunit beta (HBB).